The sequence spans 346 residues: Nicotinate-nucleotide--dimethylbenzimidazole phosphoribosyltransferase (346 aa).

Glu312 (proton acceptor) is an active-site residue.

Belongs to the CobT family.

It catalyses the reaction 5,6-dimethylbenzimidazole + nicotinate beta-D-ribonucleotide = alpha-ribazole 5'-phosphate + nicotinate + H(+). It participates in nucleoside biosynthesis; alpha-ribazole biosynthesis; alpha-ribazole from 5,6-dimethylbenzimidazole: step 1/2. Its function is as follows. Catalyzes the synthesis of alpha-ribazole-5'-phosphate from nicotinate mononucleotide (NAMN) and 5,6-dimethylbenzimidazole (DMB). This chain is Nicotinate-nucleotide--dimethylbenzimidazole phosphoribosyltransferase, found in Cupriavidus necator (strain ATCC 17699 / DSM 428 / KCTC 22496 / NCIMB 10442 / H16 / Stanier 337) (Ralstonia eutropha).